The sequence spans 156 residues: Small ribosomal subunit protein uS7 (156 aa).

This sequence belongs to the universal ribosomal protein uS7 family. As to quaternary structure, part of the 30S ribosomal subunit. Contacts proteins S9 and S11.

In terms of biological role, one of the primary rRNA binding proteins, it binds directly to 16S rRNA where it nucleates assembly of the head domain of the 30S subunit. Is located at the subunit interface close to the decoding center, probably blocks exit of the E-site tRNA. This Mycobacterium leprae (strain Br4923) protein is Small ribosomal subunit protein uS7.